The primary structure comprises 352 residues: MIKVSVIGATGYAGAELIRLLLSHSKVELKNLSSKSFVGKNINEIYPNLNKNLDKLLLDENEIFEDTDVVFASLPAGLSDDIANKCFEKNILFIDLGADFRLDNEEDYKNWYGNEYKYKNLHKEAIYSIPEIIKYDNVYNKKELKNAKIIGNPGCYPTSIGLALAPALVNKFIIKDDIIIDSKSGATGAGRELKLNTHYTECNEAFAPYKIAEHRHTPEIEQTLSNIYGEDIKVTFVPHLLPLNRGIVSTIYAKLENKNIKLKDIHNTYKNFYKDSAFVRVLNIGEIANLKYVKYSNYCDISLHMDDRTNKLIIVSTIDNMVKGAAGQAIQNMNIALGLKEDEGLNFIPPAF.

The active site involves Cys-155.

The protein belongs to the NAGSA dehydrogenase family. Type 1 subfamily.

It localises to the cytoplasm. The enzyme catalyses N-acetyl-L-glutamate 5-semialdehyde + phosphate + NADP(+) = N-acetyl-L-glutamyl 5-phosphate + NADPH + H(+). It participates in amino-acid biosynthesis; L-arginine biosynthesis; N(2)-acetyl-L-ornithine from L-glutamate: step 3/4. Functionally, catalyzes the NADPH-dependent reduction of N-acetyl-5-glutamyl phosphate to yield N-acetyl-L-glutamate 5-semialdehyde. In Brachyspira hyodysenteriae (strain ATCC 49526 / WA1), this protein is N-acetyl-gamma-glutamyl-phosphate reductase.